Reading from the N-terminus, the 154-residue chain is Ribonuclease 8 (154 aa).

The N-terminal stretch at 1–27 is a signal peptide; it reads MAPARAGCCPLLLLLLGLRVAQIPVSA. The active-site Proton acceptor is His-42. 3 disulfide bridges follow: Cys-64–Cys-118, Cys-82–Cys-133, and Cys-89–Cys-96. Residues 65–69 and Lys-90 each bind substrate; that span reads KDLNT. His-149 (proton donor) is an active-site residue.

This sequence belongs to the pancreatic ribonuclease family.

It is found in the secreted. Has a low ribonuclease activity. This Miopithecus talapoin (Angolan talapoin) protein is Ribonuclease 8 (RNASE8).